A 554-amino-acid chain; its full sequence is MASSQSSSSSIRPQAGLNEGDHQSLPQLDTLISYLLGAKRSLSSITHVWRANEIVTASHSALEKSVVLCSRTGFLRRGLNGQLRLLYDVRSEVEQISYRGRDEFSIALKNLDAADARLKHTLDLLRGTIVHASFRPGDEEQKSLHDFVDERGVEELHASLKASIDRTNTARAELDTSNHEFDDELQAIKKSLRHYHTATKLASSRLSITSSSSSASDSGLLTLSSMPGQIQSLEAHAQEMATLLEALVRHFDLCVTAVKHTDGGGAVARSITGDMPAGVDGSNDGMPNIGAEINANLNAPLDPMTDAEYQEMVAVLIKDAPEADDVVMEIQDRINEMESIFEQVQAQRDALLSISKATIEVHSHLSSLASSRLPRYISQAHNFTRVWLEENDRINSGLVELSDLHSLYDGFLNAYDSLMLEVARRRHVRQRVEKVLRDTRHKLDQLHDEDAAARETFRAEQGDFLPSDIWPGVGLAPMQVQFTRLSGGQLDGGPIGQKPLEEPSGGEYAGAAKAGVSDGSAEGEQIPDLPRHLVEEAYARVKARNKVASQLHTV.

Low complexity predominate over residues 1-10; that stretch reads MASSQSSSSS. Residues 1-22 form a disordered region; sequence MASSQSSSSSIRPQAGLNEGDH. Residues 327–353 are a coiled coil; sequence VMEIQDRINEMESIFEQVQAQRDALLS. The segment at 490–529 is disordered; sequence LDGGPIGQKPLEEPSGGEYAGAAKAGVSDGSAEGEQIPDL.

The protein belongs to the ATG17 family.

It localises to the cytoplasm. Its subcellular location is the preautophagosomal structure membrane. Its function is as follows. Autophagy-specific protein that functions in response to autophagy-inducing signals as a scaffold to recruit other ATG proteins to organize pre-autophagosomal structure (PAS) formation. Modulates the timing and magnitude of the autophagy response, such as the size of the sequestering vesicles. Plays particularly a role in pexophagy and nucleophagy. This Penicillium rubens (strain ATCC 28089 / DSM 1075 / NRRL 1951 / Wisconsin 54-1255) (Penicillium chrysogenum) protein is Autophagy-related protein 17 (atg17).